A 330-amino-acid chain; its full sequence is Aspartate--ammonia ligase (330 aa).

This sequence belongs to the class-II aminoacyl-tRNA synthetase family. AsnA subfamily.

The protein resides in the cytoplasm. It catalyses the reaction L-aspartate + NH4(+) + ATP = L-asparagine + AMP + diphosphate + H(+). The protein operates within amino-acid biosynthesis; L-asparagine biosynthesis; L-asparagine from L-aspartate (ammonia route): step 1/1. The polypeptide is Aspartate--ammonia ligase (Actinobacillus succinogenes (strain ATCC 55618 / DSM 22257 / CCUG 43843 / 130Z)).